Reading from the N-terminus, the 668-residue chain is Endoplasmic reticulum oxidoreductin-1 (668 aa).

The N-terminal stretch at 1–22 (MKPASRLFYLSLFALWSPEAQC) is a signal peptide. Cystine bridges form between Cys-79-Cys-413, Cys-89-Cys-94, Cys-150-Cys-352, and Cys-416-Cys-419. A disordered region spans residues 116–142 (KLEGPRAKHPGKSVQKEEPKRPLQGKL). FAD-binding residues include Arg-186, Thr-188, Trp-199, Ser-282, and His-285. Asn-298 and Asn-307 each carry an N-linked (GlcNAc...) asparagine glycan. Arg-314 lines the FAD pocket. N-linked (GlcNAc...) asparagine glycosylation is present at Asn-406. Residue Cys-416 is the Nucleophile of the active site. Residue Cys-419 is part of the active site. An N-linked (GlcNAc...) asparagine glycan is attached at Asn-443. Disordered stretches follow at residues 488-519 (VEES…DRAK) and 554-597 (GVTP…DPNF). Over residues 494-509 (GQQPQSHEQIEGSENS) the composition is skewed to polar residues. Over residues 570–581 (DNNDDDDDDDEF) the composition is skewed to acidic residues.

This sequence belongs to the EROs family. May function both as a monomer and a homodimer. FAD serves as cofactor.

The protein localises to the endoplasmic reticulum membrane. Functionally, essential oxidoreductase that oxidizes proteins in the endoplasmic reticulum to produce disulfide bonds. Acts by oxidizing directly pdi1 isomerase through a direct disulfide exchange. Does not act as a direct oxidant of folding substrate, but relies on pdi1 to transfer oxidizing equivalent. Does not oxidize all pdi related proteins, suggesting that it can discriminate between pdi1 and related proteins. Its reoxidation probably involves electron transfer to molecular oxygen via FAD. Acts independently of glutathione. May be responsible for a significant proportion of reactive oxygen species (ROS) in the cell, thereby being a source of oxidative stress. The polypeptide is Endoplasmic reticulum oxidoreductin-1 (ero-1) (Neurospora crassa (strain ATCC 24698 / 74-OR23-1A / CBS 708.71 / DSM 1257 / FGSC 987)).